Here is a 281-residue protein sequence, read N- to C-terminus: 2-dehydro-3-deoxyphosphooctonate aldolase (281 aa).

This sequence belongs to the KdsA family.

Its subcellular location is the cytoplasm. The enzyme catalyses D-arabinose 5-phosphate + phosphoenolpyruvate + H2O = 3-deoxy-alpha-D-manno-2-octulosonate-8-phosphate + phosphate. Its pathway is carbohydrate biosynthesis; 3-deoxy-D-manno-octulosonate biosynthesis; 3-deoxy-D-manno-octulosonate from D-ribulose 5-phosphate: step 2/3. It participates in bacterial outer membrane biogenesis; lipopolysaccharide biosynthesis. The polypeptide is 2-dehydro-3-deoxyphosphooctonate aldolase (Pseudomonas fluorescens (strain ATCC BAA-477 / NRRL B-23932 / Pf-5)).